A 225-amino-acid polypeptide reads, in one-letter code: Uridylate kinase (225 aa).

Asp-6 lines the Mg(2+) pocket. An ATP-binding site is contributed by 9 to 10 (GS). Residue Gly-44 participates in UMP binding. Residues Gly-45 and Arg-49 each contribute to the ATP site. Residues Asp-66 and 114 to 120 (THPGHTT) contribute to the UMP site. The Mg(2+) site is built by Thr-120 and Asp-121. ATP contacts are provided by Thr-140, Asn-141, Tyr-146, and Asp-149. Residue Gly-179 participates in UMP binding. Residue Ser-182 coordinates Mg(2+). Residue Ser-182 coordinates ATP.

The protein belongs to the UMP kinase family. Homohexamer; trimer of dimers.

It localises to the cytoplasm. It catalyses the reaction UMP + ATP = UDP + ADP. It participates in pyrimidine metabolism; CTP biosynthesis via de novo pathway; UDP from UMP (UMPK route): step 1/1. Inhibited by UTP. Catalyzes the reversible phosphorylation of UMP to UDP, with ATP as the most efficient phosphate donor. This chain is Uridylate kinase (pyrH), found in Pyrococcus furiosus (strain ATCC 43587 / DSM 3638 / JCM 8422 / Vc1).